We begin with the raw amino-acid sequence, 146 residues long: Decoration protein (146 aa).

Homotrimer. Interacts with the major capsid protein.

It localises to the virion. Cooperatively binds the expanded capsid, thereby stabilizing the mature capsid shell and allowing the large viral DNA to be packaged. Trimers of capsid decoration proteins molecules are located at local and icosahedral threefold axes and stabilize the expanded capsid, which shows increased spacing between capsomers. In Thermus thermophilus (Thermus thermophilus phage P23-45), this protein is Decoration protein.